Here is a 134-residue protein sequence, read N- to C-terminus: UPF0412 protein YaaI (134 aa).

Residues 1–23 (MRSVLTISAGLLFGLALSSVAHA) form the signal peptide.

It belongs to the UPF0412 family.

The polypeptide is UPF0412 protein YaaI (Salmonella agona (strain SL483)).